The chain runs to 1683 residues: E3 ubiquitin-protein ligase SHPRH (1683 aa).

Residues 1 to 43 are disordered; that stretch reads MSSRRKRAPPVRVDEEKRQQLHWNMHEDRRNEPIIISDDDEQP. The span at 12 to 32 shows a compositional bias: basic and acidic residues; sequence RVDEEKRQQLHWNMHEDRRNE. Position 266 is a phosphoserine (Ser-266). The 83-residue stretch at 307–389 folds into the Helicase ATP-binding; first part domain; it reads YQREAVNWML…TVEVLALILT (83 aa). 373-380 is an ATP binding site; that stretch reads DEMGLGKT. The H15 domain maps to 438–512; that stretch reads QCPPTRVMIL…GFSGTFTLGK (75 aa). Residues 525-607 form a disordered region; that stretch reads KQAVGSPRKI…QGHCPATSDS (83 aa). A compositionally biased stretch (basic and acidic residues) spans 534 to 547; it reads IQKETRKSGNKDTD. Basic residues predominate over residues 568-588; it reads KSRRNRSKLRKKLVPSTKKGK. The residue at position 635 (Ser-635) is a Phosphoserine. Residues 658-709 form a PHD-type zinc finger; sequence RFECICGELDQIDRKPRVQCLKCHLWQHAKCVNYDEKNLKIKPFYCPHCLVA. The region spanning 710–868 is the Helicase ATP-binding; second part domain; sequence MEPVSTRATL…FGLVVFLGIE (159 aa). The DEAQ box signature appears at 819 to 822; that stretch reads DEAQ. An RING-type zinc finger spans residues 1432–1479; the sequence is CPICARQLGKQWAVLTCGHCFCNECISIIIEQYSVGSHRSSIKCAICR. Residues 1514 to 1672 form the Helicase C-terminal domain; the sequence is AVVRTLMKIQ…ASVLTVADLA (159 aa).

Belongs to the SNF2/RAD54 helicase family. Homodimer. Interacts with HLTF, PCNA, UBE2N and RAD18. In terms of tissue distribution, broadly expressed.

It carries out the reaction S-ubiquitinyl-[E2 ubiquitin-conjugating enzyme]-L-cysteine + [acceptor protein]-L-lysine = [E2 ubiquitin-conjugating enzyme]-L-cysteine + N(6)-ubiquitinyl-[acceptor protein]-L-lysine.. It participates in protein modification; protein ubiquitination. In terms of biological role, E3 ubiquitin-protein ligase involved in DNA repair. Upon genotoxic stress, accepts ubiquitin from the UBE2N-UBE2V2 E2 complex and transfers it to 'Lys-164' of PCNA which had been monoubiquitinated by UBE2A/B-RAD18, promoting the formation of non-canonical poly-ubiquitin chains linked through 'Lys-63'. The polypeptide is E3 ubiquitin-protein ligase SHPRH (SHPRH) (Homo sapiens (Human)).